The chain runs to 361 residues: Chorismate synthase (361 aa).

Arginine 48 lines the NADP(+) pocket. FMN is bound by residues 125–127 (RSS), 238–239 (NA), glycine 278, 293–297 (KPTSS), and arginine 319.

This sequence belongs to the chorismate synthase family. In terms of assembly, homotetramer. The cofactor is FMNH2.

The enzyme catalyses 5-O-(1-carboxyvinyl)-3-phosphoshikimate = chorismate + phosphate. The protein operates within metabolic intermediate biosynthesis; chorismate biosynthesis; chorismate from D-erythrose 4-phosphate and phosphoenolpyruvate: step 7/7. In terms of biological role, catalyzes the anti-1,4-elimination of the C-3 phosphate and the C-6 proR hydrogen from 5-enolpyruvylshikimate-3-phosphate (EPSP) to yield chorismate, which is the branch point compound that serves as the starting substrate for the three terminal pathways of aromatic amino acid biosynthesis. This reaction introduces a second double bond into the aromatic ring system. This is Chorismate synthase from Aliivibrio fischeri (strain MJ11) (Vibrio fischeri).